The primary structure comprises 400 residues: tRNA-specific 2-thiouridylase MnmA (400 aa).

Residues 19–26 and Leu45 each bind ATP; that span reads AMSGGVDS. Cys113 acts as the Nucleophile in catalysis. The cysteines at positions 113 and 210 are disulfide-linked. Gly137 lines the ATP pocket. Positions 160 to 162 are interaction with tRNA; that stretch reads RDQ. Cys210 acts as the Cysteine persulfide intermediate in catalysis.

This sequence belongs to the MnmA/TRMU family.

The protein resides in the cytoplasm. It catalyses the reaction S-sulfanyl-L-cysteinyl-[protein] + uridine(34) in tRNA + AH2 + ATP = 2-thiouridine(34) in tRNA + L-cysteinyl-[protein] + A + AMP + diphosphate + H(+). Its function is as follows. Catalyzes the 2-thiolation of uridine at the wobble position (U34) of tRNA, leading to the formation of s(2)U34. This is tRNA-specific 2-thiouridylase MnmA from Nitrobacter winogradskyi (strain ATCC 25391 / DSM 10237 / CIP 104748 / NCIMB 11846 / Nb-255).